The primary structure comprises 459 residues: Ribulose bisphosphate carboxylase large chain (459 aa).

Lysine 4 carries the N6,N6,N6-trimethyllysine modification. Asparagine 113 and threonine 163 together coordinate substrate. The active-site Proton acceptor is lysine 165. Position 167 (lysine 167) interacts with substrate. Lysine 191, aspartate 193, and glutamate 194 together coordinate Mg(2+). Lysine 191 is subject to N6-carboxylysine. Histidine 284 serves as the catalytic Proton acceptor. Substrate-binding residues include arginine 285, histidine 317, and serine 369.

This sequence belongs to the RuBisCO large chain family. Type I subfamily. Heterohexadecamer of 8 large chains and 8 small chains; disulfide-linked. The disulfide link is formed within the large subunit homodimers. The cofactor is Mg(2+). Post-translationally, the disulfide bond which can form in the large chain dimeric partners within the hexadecamer appears to be associated with oxidative stress and protein turnover.

Its subcellular location is the plastid. The protein localises to the chloroplast. It carries out the reaction 2 (2R)-3-phosphoglycerate + 2 H(+) = D-ribulose 1,5-bisphosphate + CO2 + H2O. The catalysed reaction is D-ribulose 1,5-bisphosphate + O2 = 2-phosphoglycolate + (2R)-3-phosphoglycerate + 2 H(+). In terms of biological role, ruBisCO catalyzes two reactions: the carboxylation of D-ribulose 1,5-bisphosphate, the primary event in carbon dioxide fixation, as well as the oxidative fragmentation of the pentose substrate in the photorespiration process. Both reactions occur simultaneously and in competition at the same active site. This is Ribulose bisphosphate carboxylase large chain from Ceratopetalum gummiferum (New South Wales Christmas bush).